The chain runs to 175 residues: dATP triphosphohydrolase (175 aa).

R19 provides a ligand contact to dATP. Residues H34, H66, D67, E70, D75, and D119 each contribute to the Co(2+) site.

The protein belongs to the Caudovirales dATP triphosphohydrolase family. As to quaternary structure, homohexamer. Co(2+) serves as cofactor. The cofactor is Zn(2+).

It carries out the reaction dATP + H2O = 2'-deoxyadenosine + triphosphate + H(+). The enzyme catalyses dADP + H2O = 2'-deoxyadenosine + diphosphate. It catalyses the reaction dAMP + H2O = 2'-deoxyadenosine + phosphate. Functionally, catalyzes the hydrolysis of dATP, dADP and dAMP into dA. This step is essential for Z-genome synthesis (containing aminoadenine instead of adenine). Specifically removes dATP and its precursor dADP from the nucleotide pool of the host, preventing the incorporation of A into the phage genome and favoring the integration of the Z-base into the viral genome. The chain is dATP triphosphohydrolase (datZ) from Cyanophage S-2L (Cyanobacteria phage S-2L).